The primary structure comprises 458 residues: Protein unc-93 homolog A (458 aa).

A run of 5 helical transmembrane segments spans residues 8–28 (VLVVSCGFLLLFTAYGGLQNL), 42–62 (TLSTLYASVLLSSMFLPPILI), 69–89 (WTIVGSMCCYVVFSLGNFHAN), 90–110 (WYTLIPTSILLGLGAAPLWSA), and 140–160 (IFFLVFQSSGVWGNLISSLVF). The N-linked (GlcNAc...) asparagine glycan is linked to N190. The next 7 helical transmembrane spans lie at 202 to 222 (TLLGIYTGCGVLAILLVAVFL), 258 to 275 (LCLLMFLPLYSGFQQEFL), 286 to 306 (CALGIHFVGYVMICFSAMTAL), 321 to 341 (AALYALGAAIHFSCIVVFLLW), 345 to 365 (TNQLPVFFVLSGLWGMSDAVW), 390 to 410 (LGEAIGFVIAFGYSSFLCVST), and 412 to 432 (LYILLGVLSLAMVGYGTVEYL).

It belongs to the unc-93 family.

It is found in the cell membrane. This chain is Protein unc-93 homolog A (Unc93a), found in Mus musculus (Mouse).